The sequence spans 375 residues: Terpene cyclase braA (375 aa).

3 residues coordinate Mg(2+): Asp116, Asn264, and Ser268. Residues 116-120 (DDEID) carry the D(D/E)XX(D/E) motif motif. The NSE motif signature appears at 264-272 (NDVLSLQKE). Residues 348–355 (WSYSCERY) carry the WxxxxxRY motif motif. Positions 354 and 355 each coordinate (2E,6E)-farnesyl diphosphate.

This sequence belongs to the terpene synthase family. Homodimer. Requires Mg(2+) as cofactor.

It carries out the reaction (2E,6E)-farnesyl diphosphate + H2O = trichobrasilenol + diphosphate. It participates in secondary metabolite biosynthesis. Terpene cyclase; part of the gene cluster that mediates the biosynthesis of the brasilane terpene glycosides brasilane D and E. The biosynthesis starts with the activity of the terpene cyclase braA that converts farnesyl pyrophosphate into the sesquiterpene alcohol trichobrasilenol. Subsequently, trichobrasilenol is glycosylated by the O-glycosyltransferase braB putatively using UDP-GlcNAc as sugar donor to yield brasilane A. The latter then undergoes two rounds of oxidation performed by the cytochrome P450 monooxygenase braC. In the first round braC hydroxylates C-12 forming brasilane D, which serves as substrate in the second round to establish the epoxide at the bond between C-5 and C-10 and oxidize the alcohol at C-12 to an aldehyde leading to the final product brasilane E. This is Terpene cyclase braA from Annulohypoxylon truncatum (Hypoxylon truncatum).